A 154-amino-acid chain; its full sequence is Protein X (154 aa).

Positions 68–117 are mitochondrial targeting sequence; the sequence is PCALRFTSARRMETTVNAHRNLPKVLHKRTLGLSVMSTTDLEAYFKDCVF.

It belongs to the orthohepadnavirus protein X family. As to quaternary structure, may form homodimer. May interact with host CEBPA, CFLAR, CREB1, DDB1, E4F1, HBXIP, HSPD1/HSP60, NFKBIA, POLR2E and SMAD4. Interacts with host SMC5-SMC6 complex and induces its degradation. Interacts with host TRPC4AP; leading to prevent ubiquitination of TRPC4AP. Interacts with host PLSCR1; this interaction promotes ubiquitination and degradation of HBx and impairs HBx-mediated cell proliferation. In terms of processing, a fraction may be phosphorylated in insect cells and HepG2 cells, a human hepatoblastoma cell line. Phosphorylated in vitro by host protein kinase C or mitogen-activated protein kinase. N-acetylated in insect cells.

Its subcellular location is the host cytoplasm. The protein resides in the host nucleus. It localises to the host mitochondrion. Functionally, multifunctional protein that plays a role in silencing host antiviral defenses and promoting viral transcription. Does not seem to be essential for HBV infection. May be directly involved in development of cirrhosis and liver cancer (hepatocellular carcinoma). Most of cytosolic activities involve modulation of cytosolic calcium. The effect on apoptosis is controversial depending on the cell types in which the studies have been conducted. May induce apoptosis by localizing in mitochondria and causing loss of mitochondrial membrane potential. May also modulate apoptosis by binding host CFLAR, a key regulator of the death-inducing signaling complex (DISC). Promotes viral transcription by using the host E3 ubiquitin ligase DDB1 to target the SMC5-SMC6 complex to proteasomal degradation. This host complex would otherwise bind to viral episomal DNA, and prevents its transcription. Moderately stimulates transcription of many different viral and cellular transcription elements. Promoters and enhancers stimulated by HBx contain DNA binding sites for NF-kappa-B, AP-1, AP-2, c-EBP, ATF/CREB, or the calcium-activated factor NF-AT. This Hepatitis B virus genotype B1 (isolate Japan/Yamagata-2/1998) (HBV-B) protein is Protein X.